A 176-amino-acid polypeptide reads, in one-letter code: Ribosome rescue factor SmrB (176 aa).

The 76-residue stretch at 97 to 172 (LDMHGMTQQE…GDGALLVLLS (76 aa)) folds into the Smr domain.

The protein belongs to the SmrB family. As to quaternary structure, associates with collided ribosomes, but not with correctly translating polysomes.

Acts as a ribosome collision sensor. Detects stalled/collided disomes (pairs of ribosomes where the leading ribosome is stalled and a second ribosome has collided with it) and endonucleolytically cleaves mRNA at the 5' boundary of the stalled ribosome. Stalled/collided disomes form a new interface (primarily via the 30S subunits) that binds SmrB. Cleaved mRNA becomes available for tmRNA ligation, leading to ribosomal subunit dissociation and rescue of stalled ribosomes. This is Ribosome rescue factor SmrB from Vibrio vulnificus (strain CMCP6).